The following is a 38-amino-acid chain: MKVQASVKKRCEHCKIIRRKKRVYVICKVNPKHNQKQG.

It belongs to the bacterial ribosomal protein bL36 family.

The polypeptide is Large ribosomal subunit protein bL36 (Thermotoga maritima (strain ATCC 43589 / DSM 3109 / JCM 10099 / NBRC 100826 / MSB8)).